Consider the following 206-residue polypeptide: MIFRVNLLFSCFCFVLFVFDFSNASKYDQGSLNIAKRLWRDWEREANAKDMERKEVKADAEGNAQMERERRLWRDWEASQAKPLERRAWVEAVEASDQNEREKRLWRDWEGNQANDLERRAMEGLMEANEENQRAKRLWRNWEANHEYEIERKRDLPELKRRKRLWRNEDQEVACTTKCSCSDNEIFSKVDHELTTSETKRVPCCC.

The first 24 residues, 1–24, serve as a signal peptide directing secretion; it reads MIFRVNLLFSCFCFVLFVFDFSNA. Positions 25-164 are excised as a propeptide; that stretch reads SKYDQGSLNI…DLPELKRRKR (140 aa). One copy of the RLWRNWE 1; approximate repeat lies at 37-43; it reads RLWRDWE. Residues 71 to 77 form an RLWRNWE 2; approximate repeat; sequence RLWRDWE. An RLWRNWE 3; approximate repeat occupies 104 to 110; sequence RLWRDWE. One copy of the RLWRNWE 4 repeat lies at 137 to 143; the sequence is RLWRNWE. Residues 164–170 form an RLWRNWE 5; approximate repeat; it reads RLWRNED.

It belongs to the scoloptoxin-08 family. Contains 3 disulfide bonds. Expressed by the venom gland.

It localises to the secreted. This is U-scoloptoxin(08)-Cw1a from Cormocephalus westwoodi (Westwood's green centipede).